The chain runs to 155 residues: Small ribosomal subunit protein uS8m (155 aa).

The protein belongs to the universal ribosomal protein uS8 family. As to quaternary structure, component of the mitochondrial small ribosomal subunit (mt-SSU). Mature yeast 74S mitochondrial ribosomes consist of a small (37S) and a large (54S) subunit. The 37S small subunit contains a 15S ribosomal RNA (15S mt-rRNA) and 34 different proteins. The 54S large subunit contains a 21S rRNA (21S mt-rRNA) and 46 different proteins.

Its subcellular location is the mitochondrion. Its function is as follows. Component of the mitochondrial ribosome (mitoribosome), a dedicated translation machinery responsible for the synthesis of mitochondrial genome-encoded proteins, including at least some of the essential transmembrane subunits of the mitochondrial respiratory chain. The mitoribosomes are attached to the mitochondrial inner membrane and translation products are cotranslationally integrated into the membrane. The sequence is that of Small ribosomal subunit protein uS8m (MRPS8) from Saccharomyces cerevisiae (strain ATCC 204508 / S288c) (Baker's yeast).